We begin with the raw amino-acid sequence, 100 residues long: Large ribosomal subunit protein uL23 (100 aa).

This sequence belongs to the universal ribosomal protein uL23 family. In terms of assembly, part of the 50S ribosomal subunit. Contacts protein L29, and trigger factor when it is bound to the ribosome.

One of the early assembly proteins it binds 23S rRNA. One of the proteins that surrounds the polypeptide exit tunnel on the outside of the ribosome. Forms the main docking site for trigger factor binding to the ribosome. This chain is Large ribosomal subunit protein uL23, found in Aeromonas hydrophila subsp. hydrophila (strain ATCC 7966 / DSM 30187 / BCRC 13018 / CCUG 14551 / JCM 1027 / KCTC 2358 / NCIMB 9240 / NCTC 8049).